Here is a 177-residue protein sequence, read N- to C-terminus: Decaprenylphosphoryl-5-phosphoribose phosphatase (177 aa).

The next 4 membrane-spanning stretches (helical) occupy residues 35–55 (HFGEHCIGWLILALLGAIALP), 62–82 (LVAGAGAFVAHAIAVLIKRLV), 124–144 (GLPLPVVLVPPMALSRILLGV), and 150–170 (VAVGVALGATVGAIVDSVGGG).

Belongs to the PA-phosphatase related phosphoesterase family.

It localises to the cell membrane. The enzyme catalyses trans,octa-cis-decaprenylphospho-beta-D-ribofuranose 5-phosphate + H2O = trans,octa-cis-decaprenylphospho-beta-D-ribofuranose + phosphate. Its pathway is cell wall biogenesis; cell wall polysaccharide biosynthesis. Functionally, phosphatase involved in the biosynthesis of decaprenylphosphoryl arabinose (DPA), which serves as the arabinose donor for the biosynthesis of arabinogalactan, the major mycobacterial cell wall polysaccharide. Catalyzes the dephosphorylation of decaprenylphosphoryl-5-phosphoribose (DPPR) to decaprenyl-phosphoribose (DPR). This chain is Decaprenylphosphoryl-5-phosphoribose phosphatase, found in Mycobacterium tuberculosis (strain CDC 1551 / Oshkosh).